The sequence spans 105 residues: Heat shock protein HspQ (105 aa).

The segment at 75–105 (SELQDEHPEQPSMDELAQTIRKQLQAPRLRN) is disordered.

Belongs to the HspQ family.

It localises to the cytoplasm. Functionally, involved in the degradation of certain denaturated proteins, including DnaA, during heat shock stress. The sequence is that of Heat shock protein HspQ from Escherichia coli O127:H6 (strain E2348/69 / EPEC).